Reading from the N-terminus, the 248-residue chain is MKFTLVGNGRMGREVAAVISRSGIHETAAVLDVDAKITPDSFRGSDAIIDFTVRDAFLQNLDAMLASGVPVVAGTTGWDDVRAGVASKVKAAGGSLLYSANFSLGVNIFLRTVREASRLIAPFEQFDIAFSEQHHTAKADFPSGTALAAAEHILAANSRKHSIVRQLPDGRKIQPDELQVAAIRLGGVFGKHTAFIDSEADEIVISHTAKNRSGFASGAVETAAWLALRHKTAPGFYTMDDFLNERLA.

NAD(+) is bound by residues Asp32, 74-76 (GTT), and 99-102 (SANF). The Proton donor/acceptor role is filled by His134. His135 is a binding site for (S)-2,3,4,5-tetrahydrodipicolinate. Catalysis depends on Lys138, which acts as the Proton donor. 144–145 (GT) contributes to the (S)-2,3,4,5-tetrahydrodipicolinate binding site.

This sequence belongs to the DapB family.

Its subcellular location is the cytoplasm. It carries out the reaction (S)-2,3,4,5-tetrahydrodipicolinate + NAD(+) + H2O = (2S,4S)-4-hydroxy-2,3,4,5-tetrahydrodipicolinate + NADH + H(+). The enzyme catalyses (S)-2,3,4,5-tetrahydrodipicolinate + NADP(+) + H2O = (2S,4S)-4-hydroxy-2,3,4,5-tetrahydrodipicolinate + NADPH + H(+). The protein operates within amino-acid biosynthesis; L-lysine biosynthesis via DAP pathway; (S)-tetrahydrodipicolinate from L-aspartate: step 4/4. Catalyzes the conversion of 4-hydroxy-tetrahydrodipicolinate (HTPA) to tetrahydrodipicolinate. The polypeptide is 4-hydroxy-tetrahydrodipicolinate reductase (Chlorobium luteolum (strain DSM 273 / BCRC 81028 / 2530) (Pelodictyon luteolum)).